Reading from the N-terminus, the 120-residue chain is Large ribosomal subunit protein uL18 (120 aa).

It belongs to the universal ribosomal protein uL18 family. Part of the 50S ribosomal subunit; part of the 5S rRNA/L5/L18/L25 subcomplex. Contacts the 5S and 23S rRNAs.

This is one of the proteins that bind and probably mediate the attachment of the 5S RNA into the large ribosomal subunit, where it forms part of the central protuberance. The protein is Large ribosomal subunit protein uL18 of Staphylococcus carnosus (strain TM300).